Here is a 498-residue protein sequence, read N- to C-terminus: Glycerol kinase (498 aa).

Thr12 contributes to the ADP binding site. Residues Thr12, Thr13, and Ser14 each contribute to the ATP site. Thr12 lines the sn-glycerol 3-phosphate pocket. Arg16 is an ADP binding site. Arg82, Glu83, Tyr135, and Asp245 together coordinate sn-glycerol 3-phosphate. Positions 82, 83, 135, 245, and 246 each coordinate glycerol. Thr267 and Gly310 together coordinate ADP. Thr267, Gly310, Gln314, and Gly411 together coordinate ATP. Residues Gly411 and Asn415 each coordinate ADP.

It belongs to the FGGY kinase family. Homotetramer and homodimer (in equilibrium).

The enzyme catalyses glycerol + ATP = sn-glycerol 3-phosphate + ADP + H(+). It participates in polyol metabolism; glycerol degradation via glycerol kinase pathway; sn-glycerol 3-phosphate from glycerol: step 1/1. With respect to regulation, activated by phosphorylation and inhibited by fructose 1,6-bisphosphate (FBP). Functionally, key enzyme in the regulation of glycerol uptake and metabolism. Catalyzes the phosphorylation of glycerol to yield sn-glycerol 3-phosphate. The sequence is that of Glycerol kinase from Clostridium botulinum (strain Eklund 17B / Type B).